A 122-amino-acid polypeptide reads, in one-letter code: Large ribosomal subunit protein uL14 (122 aa).

This sequence belongs to the universal ribosomal protein uL14 family. In terms of assembly, part of the 50S ribosomal subunit. Forms a cluster with proteins L3 and L19. In the 70S ribosome, L14 and L19 interact and together make contacts with the 16S rRNA in bridges B5 and B8.

In terms of biological role, binds to 23S rRNA. Forms part of two intersubunit bridges in the 70S ribosome. In Bacillus subtilis (strain 168), this protein is Large ribosomal subunit protein uL14.